The primary structure comprises 322 residues: Elongation factor P--(R)-beta-lysine ligase (322 aa).

Position 72–74 (72–74 (SPE)) interacts with substrate. ATP-binding positions include 96-98 (RNN) and Asn106. Tyr115 is a substrate binding site. 241–242 (EL) contacts ATP. Residue Glu248 coordinates substrate. Gly297 is an ATP binding site.

It belongs to the class-II aminoacyl-tRNA synthetase family. EpmA subfamily. As to quaternary structure, homodimer.

It catalyses the reaction D-beta-lysine + L-lysyl-[protein] + ATP = N(6)-((3R)-3,6-diaminohexanoyl)-L-lysyl-[protein] + AMP + diphosphate + H(+). In terms of biological role, with EpmB is involved in the beta-lysylation step of the post-translational modification of translation elongation factor P (EF-P). Catalyzes the ATP-dependent activation of (R)-beta-lysine produced by EpmB, forming a lysyl-adenylate, from which the beta-lysyl moiety is then transferred to the epsilon-amino group of a conserved specific lysine residue in EF-P. The protein is Elongation factor P--(R)-beta-lysine ligase of Buchnera aphidicola subsp. Baizongia pistaciae (strain Bp).